The chain runs to 1396 residues: DNA-directed RNA polymerase subunit beta' (1396 aa).

Residues cysteine 71, cysteine 73, cysteine 86, and cysteine 89 each contribute to the Zn(2+) site. The Mg(2+) site is built by aspartate 462, aspartate 464, and aspartate 466. Zn(2+) contacts are provided by cysteine 810, cysteine 884, cysteine 891, and cysteine 894. Residues aspartate 1372–alanine 1382 are compositionally biased toward basic and acidic residues. A disordered region spans residues aspartate 1372–glutamate 1396.

It belongs to the RNA polymerase beta' chain family. In terms of assembly, the RNAP catalytic core consists of 2 alpha, 1 beta, 1 beta' and 1 omega subunit. When a sigma factor is associated with the core the holoenzyme is formed, which can initiate transcription. The cofactor is Mg(2+). It depends on Zn(2+) as a cofactor.

It carries out the reaction RNA(n) + a ribonucleoside 5'-triphosphate = RNA(n+1) + diphosphate. Its function is as follows. DNA-dependent RNA polymerase catalyzes the transcription of DNA into RNA using the four ribonucleoside triphosphates as substrates. In Caulobacter vibrioides (strain ATCC 19089 / CIP 103742 / CB 15) (Caulobacter crescentus), this protein is DNA-directed RNA polymerase subunit beta'.